The following is a 329-amino-acid chain: GMP reductase (329 aa).

Cys178 acts as the Thioimidate intermediate in catalysis. 207–230 (IIADGGIRNNGDIAKSIRFGATMC) is a binding site for NADP(+).

The protein belongs to the IMPDH/GMPR family. GuaC type 2 subfamily.

It catalyses the reaction IMP + NH4(+) + NADP(+) = GMP + NADPH + 2 H(+). Its function is as follows. Catalyzes the irreversible NADPH-dependent deamination of GMP to IMP. It functions in the conversion of nucleobase, nucleoside and nucleotide derivatives of G to A nucleotides, and in maintaining the intracellular balance of A and G nucleotides. The protein is GMP reductase of Lacticaseibacillus casei (strain BL23) (Lactobacillus casei).